A 98-amino-acid chain; its full sequence is MPQDCACRKTDRYVSFQDIDCTGNARRLMEHLDRQLSIPGRSTAFWEYFAKKRAGSAAAKPDDLFLIHSNINQFREFFEQWNDSDALSLLLQIEEECC.

This sequence belongs to the CowN family.

Functionally, is required to sustain N(2)-dependent growth in the presence of low levels of carbon monoxide (CO). Probably acts by protecting the N(2) fixation ability of the nitrogenase complex, which is inactivated in the presence of CO. The chain is N(2)-fixation sustaining protein CowN from Dechloromonas aromatica (strain RCB).